We begin with the raw amino-acid sequence, 490 residues long: Tektin-3 (490 aa).

3 O-linked (GalNAc...) threonine glycosylation sites follow: T7, T9, and T10. N-linked (GlcNAc...) asparagine glycosylation is found at N41, N86, N103, N111, N276, and N344. The stretch at 424-451 (VHEVDDTIQTLQQRLRDAEDTLQSLVHI) forms a coiled coil.

This sequence belongs to the tektin family. In terms of assembly, microtubule inner protein component of sperm flagellar doublet microtubules. Interacts with TEKT1, TEKT2, TEKT4 and TEKT5. Interacts with CCDC38. Post-translationally, N- and O-glycosylated. In terms of processing, may be proteolytically processed during the epididymal transit of spermatozoa. Ubiquitinated, leading to its degradation. Deubiquitinated by USP16, promoting its stability. In terms of tissue distribution, expressed in spermatozoa. Expressed in airway epithelial cells.

It localises to the cytoplasm. The protein localises to the cytoskeleton. The protein resides in the cilium axoneme. It is found in the flagellum axoneme. Its subcellular location is the cytoplasmic vesicle. It localises to the secretory vesicle. The protein localises to the acrosome outer membrane. Microtubule inner protein (MIP) part of the dynein-decorated doublet microtubules (DMTs) in cilia and flagellar axoneme. Forms filamentous polymers in the walls of ciliary and flagellar microtubules. Required for normal sperm mobility. The sequence is that of Tektin-3 (TEKT3) from Homo sapiens (Human).